The chain runs to 1100 residues: Lysylphosphatidylglycerol biosynthesis bifunctional protein LysX (1100 aa).

The phosphatidylglycerol lysyltransferase stretch occupies residues Met-1 to Asp-601. A run of 7 helical transmembrane segments spans residues Val-18–Val-38, Phe-60–Ala-80, Ile-84–Leu-104, Phe-112–Leu-132, Leu-154–Gly-174, Val-206–Val-226, and Ala-314–Phe-332. Positions Gly-602 to Arg-1100 are lysine--tRNA ligase. The segment at residues Val-661 to Ile-739 is a DNA-binding region (OB). 2 residues coordinate Mg(2+): Asp-1012 and Glu-1019.

This sequence in the N-terminal section; belongs to the LPG synthetase family. It in the C-terminal section; belongs to the class-II aminoacyl-tRNA synthetase family. The cofactor is Mg(2+).

The protein resides in the cell membrane. It carries out the reaction tRNA(Lys) + L-lysine + ATP = L-lysyl-tRNA(Lys) + AMP + diphosphate. It catalyses the reaction L-lysyl-tRNA(Lys) + a 1,2-diacyl-sn-glycero-3-phospho-(1'-sn-glycerol) = a 1,2-diacyl-sn-glycero-3-phospho-1'-(3'-O-L-lysyl)-sn-glycerol + tRNA(Lys). Functionally, catalyzes the production of L-lysyl-tRNA(Lys)transfer and the transfer of a lysyl group from L-lysyl-tRNA(Lys) to membrane-bound phosphatidylglycerol (PG), which produces lysylphosphatidylglycerol (LPG), one of the components of the bacterial membrane with a positive net charge. LPG synthesis contributes to the resistance to cationic antimicrobial peptides (CAMPs) and likely protects M.tuberculosis against the CAMPs produced by competiting microorganisms (bacteriocins). In fact, the modification of anionic phosphatidylglycerol with positively charged L-lysine results in repulsion of the peptides. In Mycolicibacterium vanbaalenii (strain DSM 7251 / JCM 13017 / BCRC 16820 / KCTC 9966 / NRRL B-24157 / PYR-1) (Mycobacterium vanbaalenii), this protein is Lysylphosphatidylglycerol biosynthesis bifunctional protein LysX (lysX).